The primary structure comprises 535 residues: uncharacterized protein (535 aa).

The next 2 helical transmembrane spans lie at 7–27 and 509–529; these read DFDVVVVGGGHNGLVAAAYLA and GGAVSGIGGHNAAMAVLACLA.

The protein resides in the cell membrane. This is an uncharacterized protein from Mycobacterium bovis (strain ATCC BAA-935 / AF2122/97).